We begin with the raw amino-acid sequence, 41 residues long: Cytochrome b559 subunit beta (41 aa).

A helical membrane pass occupies residues 16 to 32; the sequence is WLAVHALAVPTVFFLGS. His20 serves as a coordination point for heme.

The protein belongs to the PsbE/PsbF family. As to quaternary structure, heterodimer of an alpha subunit and a beta subunit. PSII is composed of 1 copy each of membrane proteins PsbA, PsbB, PsbC, PsbD, PsbE, PsbF, PsbH, PsbI, PsbJ, PsbK, PsbL, PsbM, PsbT, PsbX, PsbY, PsbZ, Psb30/Ycf12, at least 3 peripheral proteins of the oxygen-evolving complex and a large number of cofactors. It forms dimeric complexes. Requires heme b as cofactor.

Its subcellular location is the plastid. The protein localises to the chloroplast thylakoid membrane. In terms of biological role, this b-type cytochrome is tightly associated with the reaction center of photosystem II (PSII). PSII is a light-driven water:plastoquinone oxidoreductase that uses light energy to abstract electrons from H(2)O, generating O(2) and a proton gradient subsequently used for ATP formation. It consists of a core antenna complex that captures photons, and an electron transfer chain that converts photonic excitation into a charge separation. This is Cytochrome b559 subunit beta from Nephroselmis olivacea (Green alga).